A 287-amino-acid chain; its full sequence is MYFTRDPVIETVITSREGYKLSIRNSKHLSQDPFVVEAVEVIRLGGTSFFRNCDHSKPFLVPAADYEVMEVRDAKINLKAVGLDRGVKIVSGREALLKMPRVAPVASVQEESSSSLEEGIIEDPVVATPSPASAAPMSKKEKRKEFKNEKWKEKKKQGRRRNSKEIADAVGSSQDMIDTITEECLQESSPEERDPCERRFALIPPPTRLISEGPEEPKESQPVTAVDLNESLNALVSESCDVIESILADEDTVIFTKESEKSSNETQELSSHSLEEASVHDRISSEE.

Disordered stretches follow at residues 109–175 (QEES…SSQD), 203–223 (IPPP…SQPV), and 257–287 (KESE…SSEE). Over residues 110–136 (EESSSSLEEGIIEDPVVATPSPASAAP) the composition is skewed to low complexity. Residues 143-152 (RKEFKNEKWK) show a composition bias toward basic and acidic residues. The span at 153–162 (EKKKQGRRRN) shows a compositional bias: basic residues. The span at 273 to 287 (SLEEASVHDRISSEE) shows a compositional bias: basic and acidic residues.

This sequence belongs to the chlamydial CPn_0623/CT_504/TC_0791 family.

This is an uncharacterized protein from Chlamydia muridarum (strain MoPn / Nigg).